The chain runs to 453 residues: Secreted aspartic protease 10 (453 aa).

The signal sequence occupies residues 1 to 20; sequence MDLVIMNFVFLLYLTSVVKC. A Peptidase A1 domain is found at 52–372; the sequence is YTTELEIGSN…DLQDMTISVA (321 aa). Residue Asp70 is part of the active site. 70–72 contributes to the pepstatin A binding site; it reads DTG. Cys85 and Cys112 are oxidised to a cystine. Asn115 and Asn128 each carry an N-linked (GlcNAc...) asparagine glycan. 138–139 is a binding site for pepstatin A; the sequence is VD. N-linked (GlcNAc...) asparagine glycans are attached at residues Asn168, Asn208, Asn211, and Asn245. The active site involves Asp266. 266 to 270 lines the pepstatin A pocket; the sequence is DTGST. An N-linked (GlcNAc...) asparagine glycan is attached at Asn287. Residues Cys301 and Cys333 are joined by a disulfide bond. The interval 387–432 is disordered; sequence NPNEDQNEVPTSTSFTQSASSSGSQPSSTISGENMDKNTTSSSSGN. The span at 397–417 shows a compositional bias: low complexity; sequence TSTSFTQSASSSGSQPSSTIS. Over residues 423–432 the composition is skewed to polar residues; it reads KNTTSSSSGN. An N-linked (GlcNAc...) asparagine glycan is attached at Asn424. Ser429 carries GPI-anchor amidated serine lipidation. Residues 430-453 constitute a propeptide, removed in mature form; the sequence is SGNCQTRSWIAILSALFLVYIHII.

It belongs to the peptidase A1 family. The GPI-anchor is attached to the protein in the endoplasmic reticulum and serves to target the protein to the cell surface. There, the glucosamine-inositol phospholipid moiety is cleaved off and the GPI-modified mannoprotein is covalently attached via its lipidless GPI glycan remnant to the 1,6-beta-glucan of the outer cell wall layer.

It localises to the secreted. The protein localises to the cell membrane. The catalysed reaction is Preferential cleavage at the carboxyl of hydrophobic amino acids, but fails to cleave 15-Leu-|-Tyr-16, 16-Tyr-|-Leu-17 and 24-Phe-|-Phe-25 of insulin B chain. Activates trypsinogen, and degrades keratin.. In terms of biological role, secreted aspartic peptidases (SAPs) are a group of ten acidic hydrolases considered as key virulence factors. These enzymes supply the fungus with nutrient amino acids as well as are able to degrade the selected host's proteins involved in the immune defense. Required for cell surface integrity and cell separation during budding. The polypeptide is Secreted aspartic protease 10 (Candida albicans (strain SC5314 / ATCC MYA-2876) (Yeast)).